Here is a 351-residue protein sequence, read N- to C-terminus: Dihydroorotate dehydrogenase (quinone) (351 aa).

FMN is bound by residues alanine 61–lysine 65 and threonine 85. Lysine 65 is a substrate binding site. Asparagine 110 to phenylalanine 114 provides a ligand contact to substrate. FMN-binding residues include asparagine 139 and asparagine 172. Asparagine 172 provides a ligand contact to substrate. Serine 175 acts as the Nucleophile in catalysis. Asparagine 177 lines the substrate pocket. Positions 217 and 245 each coordinate FMN. Asparagine 246 to threonine 247 lines the substrate pocket. FMN-binding positions include glycine 268, glycine 297, and tyrosine 318–serine 319.

The protein belongs to the dihydroorotate dehydrogenase family. Type 2 subfamily. In terms of assembly, monomer. It depends on FMN as a cofactor.

Its subcellular location is the cell membrane. The enzyme catalyses (S)-dihydroorotate + a quinone = orotate + a quinol. It functions in the pathway pyrimidine metabolism; UMP biosynthesis via de novo pathway; orotate from (S)-dihydroorotate (quinone route): step 1/1. Catalyzes the conversion of dihydroorotate to orotate with quinone as electron acceptor. The polypeptide is Dihydroorotate dehydrogenase (quinone) (Xanthomonas oryzae pv. oryzae (strain PXO99A)).